Here is a 765-residue protein sequence, read N- to C-terminus: Amine oxidase [copper-containing] 3 (765 aa).

Topologically, residues 1-6 (MTQKTT) are cytoplasmic. Residues 7 to 27 (LVLLALAVITIFALVCVLLAG) form a helical; Signal-anchor for type II membrane protein membrane-spanning segment. The Extracellular segment spans residues 28–765 (RSGDGGGLSQ…SHGGFAYRDN (738 aa)). The N-linked (GlcNAc...) asparagine glycan is linked to N137. The cysteines at positions 198 and 199 are disulfide-linked. N-linked (GlcNAc...) asparagine glycosylation is found at N232 and N294. The active-site Proton acceptor is the D386. C404 and C430 form a disulfide bridge. The active-site Schiff-base intermediate with substrate; via topaquinone is Y471. Y471 is modified (2',4',5'-topaquinone). Residues H520 and H522 each coordinate Cu(2+). Ca(2+) contacts are provided by D529, L530, D531, and E572. The N-linked (GlcNAc...) asparagine glycan is linked to N592. E641 is a Ca(2+) binding site. N659 carries N-linked (GlcNAc...) asparagine glycosylation. F663 provides a ligand contact to Ca(2+). N666 carries N-linked (GlcNAc...) asparagine glycosylation. E667, D673, and L674 together coordinate Ca(2+). A Cu(2+)-binding site is contributed by H684. A disulfide bond links C734 and C741.

The protein belongs to the copper/topaquinone oxidase family. In terms of assembly, homodimer; disulfide-linked. Probably forms heterodimers with AOC2. Cu(2+) is required as a cofactor. Requires Ca(2+) as cofactor. L-topaquinone serves as cofactor. Post-translationally, topaquinone (TPQ) is generated by copper-dependent autoxidation of a specific tyrosyl residue. In terms of processing, N- and O-glycosylated.

It localises to the cell membrane. It carries out the reaction methylamine + O2 + H2O = formaldehyde + H2O2 + NH4(+). It catalyses the reaction benzylamine + O2 + H2O = benzaldehyde + H2O2 + NH4(+). The catalysed reaction is 2-phenylethylamine + O2 + H2O = 2-phenylacetaldehyde + H2O2 + NH4(+). Catalyzes the oxidative deamination of primary amines to the corresponding aldehydes with the concomitant production of hydrogen peroxide and ammonia. Has a preference for the primary monoamines methylamine and benzylamine. Could also act on 2-phenylethylamine but much less efficiently. At endothelial cells surface can also function as a cell adhesion protein that participates in lymphocyte extravasation and recirculation by mediating the binding of lymphocytes to peripheral lymph node vascular endothelial cells in an L-selectin-independent fashion. The polypeptide is Amine oxidase [copper-containing] 3 (Mus musculus (Mouse)).